Reading from the N-terminus, the 490-residue chain is WD repeat-containing protein JIP5 (490 aa).

WD repeat units follow at residues 23-64 (KYND…ERMQ), 70-112 (QKKK…GSCR), 118-155 (PIES…ISKD), 157-196 (SSKD…NKFK), 242-284 (DQED…LMDQ), 286-327 (SRIK…HRVN), and 340-377 (GTAD…EEEE). The interval 368–490 (SAEGDDEEEE…SHGIRRFDGL (123 aa)) is disordered. 2 stretches are compositionally biased toward acidic residues: residues 370–406 (EGDD…EGDD) and 413–437 (EESD…EEST). Residues 438–448 (ETDHKNIEAES) are compositionally biased toward basic and acidic residues. A compositionally biased stretch (polar residues) spans 450 to 461 (KQANKRQASQPK). The span at 469 to 484 (KQKLKQTSKLAHSHGI) shows a compositional bias: basic residues.

Belongs to the WD repeat WDR55 family.

Its subcellular location is the nucleus. The protein localises to the nucleolus. The protein is WD repeat-containing protein JIP5 (JIP5) of Meyerozyma guilliermondii (strain ATCC 6260 / CBS 566 / DSM 6381 / JCM 1539 / NBRC 10279 / NRRL Y-324) (Yeast).